The primary structure comprises 175 residues: Small ribosomal subunit protein uS5 (175 aa).

The 64-residue stretch at 19–82 (WVDRLVSVNR…DDAKKNVIRV (64 aa)) folds into the S5 DRBM domain.

This sequence belongs to the universal ribosomal protein uS5 family. Part of the 30S ribosomal subunit. Contacts proteins S4 and S8.

Functionally, with S4 and S12 plays an important role in translational accuracy. Located at the back of the 30S subunit body where it stabilizes the conformation of the head with respect to the body. The polypeptide is Small ribosomal subunit protein uS5 (Salinibacter ruber (strain DSM 13855 / M31)).